The primary structure comprises 662 residues: Probable quinol oxidase subunit 1 (662 aa).

2 helical membrane passes run 14-34 and 58-78; these read WMITMAQIGAPFLVIGLIAVI and LMYLICAVLMFVRGGIDALLL. His102 lines the Fe(II)-heme a pocket. 8 helical membrane passes run 103–123, 140–160, 187–207, 228–248, 273–293, 311–331, 336–356, and 376–396; these read GVIMIIFMAMPFVFGLWNVVV, ISFWLFFVGMILFNLSFIIGG, VAIQISGIGTLMTGINFFVTI, FITTLIVILAFPVFTVVLALM, FFWVWGHPEVYIVILPAFGIY, MVWATAGIAFLSFLVWVHHFF, GALINSFFSISTMLIGVPTGV, and MLFSLAFIPNFLLGGVTGVML. Cu cation-binding residues include His279, Tyr283, His328, and His329. The segment at residues 279-283 is a cross-link (1'-histidyl-3'-tyrosine (His-Tyr)); that stretch reads HPEVY. His414 is a heme a3 binding site. 5 helical membrane-spanning segments follow: residues 415-435, 451-471, 492-512, 586-605, and 609-628; these read FHYTLVTGVVFACLAGLIFWY, CFWLFMIGFNVCFLPQFILGL, VISTIGALLMAVGFLFLVVSI, THTGVIMGIFMLLGGFFLIF, and IPAAICLVGILGSLVYQSFV. Residue His416 participates in Fe(II)-heme a binding.

It belongs to the heme-copper respiratory oxidase family. It depends on Cu cation as a cofactor. Requires ferriheme a as cofactor. The cofactor is Heme A3..

It localises to the cell membrane. The catalysed reaction is 2 a quinol + O2 = 2 a quinone + 2 H2O. Its pathway is energy metabolism; oxidative phosphorylation. Its function is as follows. Catalyzes quinol oxidation with the concomitant reduction of oxygen to water. The sequence is that of Probable quinol oxidase subunit 1 (qoxB) from Staphylococcus haemolyticus (strain JCSC1435).